The primary structure comprises 314 residues: Chitinase 1 (314 aa).

The first 26 residues, 1-26 (MASVSPSSLLLLFFALLSPLLPLTSA), serve as a signal peptide directing secretion. Residues 27–296 (LVFREYIGSQ…NVFRYEMQAQ (270 aa)) form the GH18 domain. E151 functions as the Proton donor in the catalytic mechanism.

The protein belongs to the glycosyl hydrolase 18 family. Chitinase class II subfamily.

The enzyme catalyses Random endo-hydrolysis of N-acetyl-beta-D-glucosaminide (1-&gt;4)-beta-linkages in chitin and chitodextrins.. Functionally, able to cleave glycolchitin. This Tulipa saxatilis subsp. bakeri (Tulip) protein is Chitinase 1.